A 549-amino-acid chain; its full sequence is Probable amidase (549 aa).

Residues K132 and S209 each act as charge relay system in the active site. Catalysis depends on S233, which acts as the Acyl-ester intermediate.

This sequence belongs to the amidase family.

It catalyses the reaction a monocarboxylic acid amide + H2O = a monocarboxylate + NH4(+). In Saccharomyces cerevisiae (strain ATCC 204508 / S288c) (Baker's yeast), this protein is Probable amidase (AMD2).